A 592-amino-acid chain; its full sequence is V-type ATP synthase alpha chain (592 aa).

Residue 232–239 (GPFGSGKT) coordinates ATP.

It belongs to the ATPase alpha/beta chains family.

The enzyme catalyses ATP + H2O + 4 H(+)(in) = ADP + phosphate + 5 H(+)(out). In terms of biological role, produces ATP from ADP in the presence of a proton gradient across the membrane. The V-type alpha chain is a catalytic subunit. In Clostridioides difficile (strain 630) (Peptoclostridium difficile), this protein is V-type ATP synthase alpha chain.